A 118-amino-acid chain; its full sequence is Small ribosomal subunit protein uS13 (118 aa).

The tract at residues 92-118 (RRSLPVRGQRTKTNARTRKGPRKPIKK) is disordered.

Belongs to the universal ribosomal protein uS13 family. Part of the 30S ribosomal subunit. Forms a loose heterodimer with protein S19. Forms two bridges to the 50S subunit in the 70S ribosome.

Located at the top of the head of the 30S subunit, it contacts several helices of the 16S rRNA. In the 70S ribosome it contacts the 23S rRNA (bridge B1a) and protein L5 of the 50S subunit (bridge B1b), connecting the 2 subunits; these bridges are implicated in subunit movement. Contacts the tRNAs in the A and P-sites. The protein is Small ribosomal subunit protein uS13 of Acinetobacter baylyi (strain ATCC 33305 / BD413 / ADP1).